A 595-amino-acid chain; its full sequence is NADH-quinone oxidoreductase subunit C/D (595 aa).

The interval 1 to 185 (MNKNICLSAS…NPFVLTKEKE (185 aa)) is NADH dehydrogenase I subunit C. The tract at residues 209–595 (DFMFLNFGPN…IDFVMSDVDR (387 aa)) is NADH dehydrogenase I subunit D.

This sequence in the N-terminal section; belongs to the complex I 30 kDa subunit family. In the C-terminal section; belongs to the complex I 49 kDa subunit family. NDH-1 is composed of 13 different subunits. Subunits NuoB, CD, E, F, and G constitute the peripheral sector of the complex.

The protein localises to the cell inner membrane. It catalyses the reaction a quinone + NADH + 5 H(+)(in) = a quinol + NAD(+) + 4 H(+)(out). In terms of biological role, NDH-1 shuttles electrons from NADH, via FMN and iron-sulfur (Fe-S) centers, to quinones in the respiratory chain. The immediate electron acceptor for the enzyme in this species is believed to be ubiquinone. Couples the redox reaction to proton translocation (for every two electrons transferred, four hydrogen ions are translocated across the cytoplasmic membrane), and thus conserves the redox energy in a proton gradient. In Baumannia cicadellinicola subsp. Homalodisca coagulata, this protein is NADH-quinone oxidoreductase subunit C/D.